The sequence spans 194 residues: MRLTDIEIEQCLDNGTIIIDPRPGIEAISGVSVDVRLGSQFRVFKDHTAPYIDLSGPSAEMQIALDRIMSDKIEIADDQAFFLHPGELALAVTYESVTLPADIVGWLDGRSSLARLGLMVHVTAHRIDPGWQGKIVLEFFNSGKLPLALRPGMTIGALNFERLSSAVARPYNTRKSSKYKDQQEAVASRISQDK.

DCTP contacts are provided by residues 110 to 115, D128, 136 to 138, Y171, K178, and Q182; these read RSSLAR and VLE. E138 serves as the catalytic Proton donor/acceptor. The tract at residues 174–194 is disordered; it reads RKSSKYKDQQEAVASRISQDK.

Belongs to the dCTP deaminase family. In terms of assembly, homotrimer.

The catalysed reaction is dCTP + H2O + H(+) = dUTP + NH4(+). The protein operates within pyrimidine metabolism; dUMP biosynthesis; dUMP from dCTP (dUTP route): step 1/2. Its function is as follows. Catalyzes the deamination of dCTP to dUTP. This is dCTP deaminase from Shewanella frigidimarina (strain NCIMB 400).